The sequence spans 383 residues: Seipin (383 aa).

At 1–27 the chain is on the cytoplasmic side; it reads MVNDPPVPALLWAQEVGHVLAGRARRL. Residues 28 to 48 form a helical membrane-spanning segment; the sequence is MLQFGVLFCTILLLLWVSVFL. At 49–242 the chain is on the lumenal side; sequence YGSFYYSYMP…TCAFVGVASN (194 aa). 2 N-linked (GlcNAc...) asparagine glycosylation sites follow: Asn-88 and Asn-242. A helical membrane pass occupies residues 243-263; that stretch reads FTFLSVIVLFSYMQWVWGAVW. At 264-383 the chain is on the cytoplasmic side; that stretch reads PRHRFSLQVN…LRQRPTCSSS (120 aa). A disordered region spans residues 279–383; it reads NSHHGAPRRI…LRQRPTCSSS (105 aa). Position 289 is a phosphoserine (Ser-289). The segment covering 292–302 has biased composition (polar residues); sequence QPGQESTQQSD. Over residues 322–332 the composition is skewed to basic and acidic residues; it reads EEEKPEKRPLN. Residues Ser-342 and Ser-345 each carry the phosphoserine modification. The segment covering 353 to 371 has biased composition (low complexity); sequence TEANPPTSASASALAPETL.

It belongs to the seipin family. In terms of assembly, undecamer (an oligomer having eleven subunits). Oligomerization is important for its function in lipid droplet formation. Interacts with LDAF1 to form an oligomeric complex. Interacts with RAB18. Interacts with ZFYVE1 in a RAB18-dependent manner. Expressed in the paraventricular nucleus of the hypothalamus (PVN) and brainstem dorsal vagal complex (DVC) in oxytocin and catecholaminergic neurons (at protein level). Highest expression detected in subcutaneous and epididymal white adipose tissue, brown adipose tissue and testis. Also expressed in brain, skeletal muscle and adrenal gland, with lower levels detected in liver, heart, kidney, spleen, lung and small intestine. In brain, detected in piriform cortex, olfactory tubercle, islands of Calleja, lateral septal nucleus, medial septal nucleus, nucleus of the vertical limb of the diagonal band, nucleus of the horizontal limb of the diagonal band, preoptic area, paraventricular thalamic nucleus, lateral globus pallidus, supraoptic nucleus, suprachiasmatic nucleus, subfornical organ, paraventricular nucleus of the hypothalamus, zona incerta, dorsomedial nucleus of the hypothalamus, ventromedial nucleus of the hypothalamus, arcuate nucleus of the hypothalamus, basomedial amygdaloid nucleus, medial amygdaloid nucleus, medial habenular, pyramidal cell layer of the hippocampus, granular layer of the dentate gyrus, posterior hypothalamus, supramammilliary nucleus, premammillary nucleus, nucleus of Darkschewitsch, Edinger-Westphal nucleus, ventral tegmental area, dorsal raphe nucleus, periaqueductal gray, median raphe nucleus, lateral parabrachial nucleus, dorsal tegmental nucleus, laterodorsal tegmental nucleus, locus coeruleus, Barrington's nucleus, medial vestibular nucleus, ambiguous nucleus, dorsal vagal complex and hypoglossal nucleus.

It localises to the endoplasmic reticulum membrane. Its subcellular location is the lipid droplet. Functionally, plays a crucial role in the formation of lipid droplets (LDs) which are storage organelles at the center of lipid and energy homeostasis. In association with LDAF1, defines the sites of LD formation in the ER. Also required for growth and maturation of small nascent LDs into larger mature LDs. Mediates the formation and/or stabilization of endoplasmic reticulum-lipid droplets (ER-LD) contacts, facilitating protein and lipid delivery from the ER into growing LDs. Regulates the maturation of ZFYVE1-positive nascent LDs and the function of the RAB18-ZFYVE1 complex in mediating the formation of ER-LD contacts. Binds anionic phospholipids including phosphatidic acid. Plays an important role in the differentiation and development of adipocytes. This is Seipin from Mus musculus (Mouse).